A 192-amino-acid polypeptide reads, in one-letter code: Molybdenum cofactor guanylyltransferase (192 aa).

Residues 10–12 (LAG), Lys-23, Asn-51, Asp-69, and Asp-99 each bind GTP. Asp-99 provides a ligand contact to Mg(2+).

It belongs to the MobA family. As to quaternary structure, monomer. Mg(2+) is required as a cofactor.

The protein localises to the cytoplasm. It carries out the reaction Mo-molybdopterin + GTP + H(+) = Mo-molybdopterin guanine dinucleotide + diphosphate. Functionally, transfers a GMP moiety from GTP to Mo-molybdopterin (Mo-MPT) cofactor (Moco or molybdenum cofactor) to form Mo-molybdopterin guanine dinucleotide (Mo-MGD) cofactor. In Haemophilus influenzae (strain ATCC 51907 / DSM 11121 / KW20 / Rd), this protein is Molybdenum cofactor guanylyltransferase.